Reading from the N-terminus, the 467-residue chain is Acetyl-CoA decarbonylase/synthase complex subunit beta (467 aa).

[Ni-Fe-S] cluster is bound by residues Cys193, Cys196, Cys282, and Cys284. The segment at 403–428 is disordered; it reads RWAEEEEEEEEKAPEEEAPAEEPTME. The segment covering 405-426 has biased composition (acidic residues); that stretch reads AEEEEEEEEKAPEEEAPAEEPT.

The protein belongs to the CdhC family. Monomer. The ACDS complex is made up of alpha, epsilon, beta, gamma and delta chains with a probable stoichiometry of (alpha(2)epsilon(2))(4)-beta(8)-(gamma(1)delta(1))(8). It depends on [Ni-Fe-S] cluster as a cofactor.

It carries out the reaction Co(I)-[corrinoid Fe-S protein] + acetyl-CoA + H(+) = methyl-Co(III)-[corrinoid Fe-S protein] + CO + CoA. Part of a complex that catalyzes the reversible cleavage of acetyl-CoA, allowing autotrophic growth from CO(2). The alpha-epsilon complex generates CO from CO(2), while the beta subunit (this protein) combines the CO with CoA and a methyl group to form acetyl-CoA. The methyl group, which is incorporated into acetyl-CoA, is transferred to the beta subunit by a corrinoid iron-sulfur protein (the gamma-delta complex). This is Acetyl-CoA decarbonylase/synthase complex subunit beta from Methanopyrus kandleri (strain AV19 / DSM 6324 / JCM 9639 / NBRC 100938).